Reading from the N-terminus, the 119-residue chain is Beta-2-microglobulin (119 aa).

The N-terminal stretch at 1-20 (MARSVVVSLFVLLALAGLEA) is a signal peptide. Positions 25-114 (PKIQVYSRHP…VTFQTPKTVK (90 aa)) constitute an Ig-like C1-type domain.

The protein belongs to the beta-2-microglobulin family. Heterodimer of an alpha chain and a beta chain. Beta-2-microglobulin is the beta-chain of major histocompatibility complex class I molecules.

It is found in the secreted. In terms of biological role, component of the class I major histocompatibility complex (MHC). Involved in the presentation of peptide antigens to the immune system. This Brachyteles arachnoides (Southern muriqui) protein is Beta-2-microglobulin (B2M).